Here is a 92-residue protein sequence, read N- to C-terminus: Small ribosomal subunit protein uS19 (92 aa).

This sequence belongs to the universal ribosomal protein uS19 family.

Its function is as follows. Protein S19 forms a complex with S13 that binds strongly to the 16S ribosomal RNA. The sequence is that of Small ribosomal subunit protein uS19 from Mycoplasmopsis agalactiae (strain NCTC 10123 / CIP 59.7 / PG2) (Mycoplasma agalactiae).